Consider the following 564-residue polypeptide: MRQSLTLIPTLREVPADAEAKSHQLLLRAGFIRQNTSGVYSYMPLAYKVIQNIQQIVREEMEKIDAVEMLMPALQQAETWQESGRWYTYGPELMRLKDRHGREFALGATHEEVITSLVRDEVKSYKRLPLTLYQIQSKFRDEKRPRFGLLRGREFIMKDAYSFHASAESLDETYQKMYEAYSNIFARCGINVRPVIADSGAMGGKDTHEFMALSAIGEDTIAYSDESQYAANIEMAEVLHQEVPSDEEPKALEKVHTPNVKTIEELTAFLQVSAEACIKSVLFKADDRFVLVLVRGDHEVNDIKVKNLLHAEVVELATHEEVIQQLGTEPGFVGPVGIHQDVEVYADQAVKAMVNAVAGANEGDHHYKNVNVNRDAQIKEFADLRFIKEGDPSPDGKGTIRFAEGIEVGQVFKLGTRYSEAMNATYLDENGRAQPMLMGCYGIGVSRTLSAIAEQHHDEKGLIWPKSVAPYDLHILALNMKNDGQRELAEKLYADLKAEGYEVLYDDRAERAGVKFADSDLIGLPIRITVGKRADEGIVEVKIRQTGESTEISVDELSAFISKQ.

Belongs to the class-II aminoacyl-tRNA synthetase family. ProS type 1 subfamily. As to quaternary structure, homodimer.

Its subcellular location is the cytoplasm. The catalysed reaction is tRNA(Pro) + L-proline + ATP = L-prolyl-tRNA(Pro) + AMP + diphosphate. Functionally, catalyzes the attachment of proline to tRNA(Pro) in a two-step reaction: proline is first activated by ATP to form Pro-AMP and then transferred to the acceptor end of tRNA(Pro). As ProRS can inadvertently accommodate and process non-cognate amino acids such as alanine and cysteine, to avoid such errors it has two additional distinct editing activities against alanine. One activity is designated as 'pretransfer' editing and involves the tRNA(Pro)-independent hydrolysis of activated Ala-AMP. The other activity is designated 'posttransfer' editing and involves deacylation of mischarged Ala-tRNA(Pro). The misacylated Cys-tRNA(Pro) is not edited by ProRS. This is Proline--tRNA ligase from Bacillus subtilis (strain 168).